Reading from the N-terminus, the 226-residue chain is Chalcone--flavanone isomerase (226 aa).

Thr-51, Asn-116, and Ser-194 together coordinate substrate.

Belongs to the chalcone isomerase family.

The enzyme catalyses a chalcone = a flavanone.. The protein operates within secondary metabolite biosynthesis; flavonoid biosynthesis. Catalyzes the intramolecular cyclization of bicyclic chalcones into tricyclic (S)-flavanones. Responsible for the isomerization of 4,2',4',6'-tetrahydroxychalcone (also termed chalcone) into naringenin. This Canna generalis (Canna lily) protein is Chalcone--flavanone isomerase (CHI).